A 352-amino-acid chain; its full sequence is MASWPPLELQSSNQSQLFPQNATACDNAPEAWDLLHRVLPTFIISICSFGLLGNLFVLLVFLLPRRRLNVAEIYLANLAASDLVFVLGLPFWAENIWNQFNWPFGALLCRVINGIIKANLFISIFLVVAISQDRYCVLVHPMASRRRQRRRQARVTCVLIWVVGGLLSIPTFLLRSIQAVPDLNITACILLLPHEAWHFARIVELNILAFLLPLAAIIFFNYHILASLRGREEVSRTRCGGSKDSKTTALILTLVVAFLVCWAPYHFFAFLEFLFQVQAVRGCFWEDFIDLGLQLANFLAFTNSSLNPVIYVFVGRLFRTKVWELYKQCTPKSLAPISSSHRKEIFQLFWRN.

Residues 1 to 41 (MASWPPLELQSSNQSQLFPQNATACDNAPEAWDLLHRVLPT) lie on the Extracellular side of the membrane. Residues N13 and N21 are each glycosylated (N-linked (GlcNAc...) asparagine). Residues 42–62 (FIISICSFGLLGNLFVLLVFL) traverse the membrane as a helical segment. Residues 63 to 72 (LPRRRLNVAE) lie on the Cytoplasmic side of the membrane. A helical transmembrane segment spans residues 73-93 (IYLANLAASDLVFVLGLPFWA). Residues 94–110 (ENIWNQFNWPFGALLCR) are Extracellular-facing. C109 and C188 are disulfide-bonded. Residues 111–131 (VINGIIKANLFISIFLVVAIS) form a helical membrane-spanning segment. Residues 132-153 (QDRYCVLVHPMASRRRQRRRQA) are Cytoplasmic-facing. Residues 154–174 (RVTCVLIWVVGGLLSIPTFLL) form a helical membrane-spanning segment. Over 175-206 (RSIQAVPDLNITACILLLPHEAWHFARIVELN) the chain is Extracellular. The N-linked (GlcNAc...) asparagine glycan is linked to N184. The helical transmembrane segment at 207–227 (ILAFLLPLAAIIFFNYHILAS) threads the bilayer. Residues 228–250 (LRGREEVSRTRCGGSKDSKTTAL) lie on the Cytoplasmic side of the membrane. A helical transmembrane segment spans residues 251–271 (ILTLVVAFLVCWAPYHFFAFL). Residues 272–294 (EFLFQVQAVRGCFWEDFIDLGLQ) lie on the Extracellular side of the membrane. The chain crosses the membrane as a helical span at residues 295–315 (LANFLAFTNSSLNPVIYVFVG). Topologically, residues 316 to 352 (RLFRTKVWELYKQCTPKSLAPISSSHRKEIFQLFWRN) are cytoplasmic. The S-palmitoyl cysteine moiety is linked to residue C329.

This sequence belongs to the G-protein coupled receptor 1 family. Bradykinin receptor subfamily. BDKRB1 sub-subfamily.

The protein resides in the cell membrane. This is a receptor for bradykinin. Could be a factor in chronic pain and inflammation. In Macaca mulatta (Rhesus macaque), this protein is B1 bradykinin receptor (BDKRB1).